A 301-amino-acid chain; its full sequence is Rhodopsin (301 aa).

Topologically, residues 1 to 18 (LHMIHLHWYQYPPMNPMM) are extracellular. The helical transmembrane segment at 19-43 (YPLLLIFMLFTGILCLAGNFVTIWV) threads the bilayer. Residues 44 to 55 (FMNTKSLRTPAN) lie on the Cytoplasmic side of the membrane. Residues 56–78 (LLVVNLAMSDFLMMFTMFPPMMV) form a helical membrane-spanning segment. Over 79-92 (TCYYHTWTLGPTFC) the chain is Extracellular. C92 and C169 are oxidised to a cystine. The helical transmembrane segment at 93-115 (QVYAFLGNLCGCASIWTMVFITF) threads the bilayer. The 'Ionic lock' involved in activated form stabilization motif lies at 116-118 (DRY). The Cytoplasmic portion of the chain corresponds to 116 to 134 (DRYNVIVKGVAGEPLSTKK). A helical membrane pass occupies residues 135–155 (ASLWILTIWVLSTTWCIAPFF). Residues 156–182 (GWNHYVPEGNLTGCGTDYLSEDILSRS) lie on the Extracellular side of the membrane. The N-linked (GlcNAc...) asparagine glycan is linked to N165. Residues 183-204 (YLYVYSTWVYFLPLAITIYCYV) form a helical membrane-spanning segment. At 205-245 (FIIKAVAAHEKGMRDQAKKMGIKSLRNEEAQKTSAECRLAK) the chain is on the cytoplasmic side. Residues 246 to 267 (IAMTTVALWFIAWTPCLLINWV) form a helical membrane-spanning segment. The Extracellular portion of the chain corresponds to 268 to 278 (GMFARSYLSPV). A helical membrane pass occupies residues 279–300 (YTIWGYVFAKANAVYNPIVYAI). At K288 the chain carries N6-(retinylidene)lysine.

The protein belongs to the G-protein coupled receptor 1 family. Opsin subfamily. In terms of assembly, homodimer. Interacts with GNAQ. Post-translationally, contains one covalently linked retinal chromophore.

It is found in the cell projection. Its subcellular location is the rhabdomere membrane. Functionally, photoreceptor required for image-forming vision at low light intensity. Can use both retinal and 3-dehydroretinal as visual pigment. Light-induced isomerization of 11-cis to all-trans retinal triggers a conformational change that activates signaling via G-proteins. Signaling via GNAQ probably mediates the activation of phospholipase C. The protein is Rhodopsin (RHO) of Procambarus seminolae (Crayfish).